Consider the following 430-residue polypeptide: Multisubstrate adapter protein soc-1 (430 aa).

A PH domain is found at N7–K133. Residues S192–S222 are compositionally biased toward low complexity. 3 disordered regions span residues S192 to T246, E275 to F303, and R315 to D377. Residues R341–E369 are compositionally biased toward polar residues.

Interacts (via C-terminus) with sem-5 (probably via SH3 domain 2). Interacts with nicotinic acetylcholine receptor. In terms of processing, may be phosphorylated.

Its function is as follows. Adapter protein which modulates signaling mediated by several receptor tyrosine kinases. Plays a role in fluid homeostasis, probably downstream of receptor egl-15 and upstream of let-60/Ras. Involved in nicotinic acetylcholine receptor (nAChR)-mediated sensitivity to nicotine and levamisole and gamma-aminobutyric acid (GABA)receptor-mediated sensitivity to muscimol. Regulates synaptic levels of nAchR receptor subunit lev-1 and unc-38, and GABA receptor subunit unc-49 in the nerve cord, probably downstream of egl-15. Regulates motility. During the formation of neuromuscular junctions at the larval stage, down-regulates membrane protrusion from body wall muscles, probably downstream of egl-15. Promotes vulva induction and down-regulates fertility, probably downstream of receptor let-23. Down-regulates daf-2-mediated repression of dauer formation and positively regulates daf-2-mediated aging. May be involved in the recruitment of phosphatase ptp-2 to egl-15. In Caenorhabditis elegans, this protein is Multisubstrate adapter protein soc-1.